Reading from the N-terminus, the 219-residue chain is Ribonuclease HII (219 aa).

The RNase H type-2 domain occupies 10-219; the sequence is HLEAGTDEAG…LLPEQTVLDL (210 aa). The a divalent metal cation site is built by aspartate 16, glutamate 17, and aspartate 108.

Belongs to the RNase HII family. Requires Mn(2+) as cofactor. It depends on Mg(2+) as a cofactor.

It localises to the cytoplasm. The enzyme catalyses Endonucleolytic cleavage to 5'-phosphomonoester.. In terms of biological role, endonuclease that specifically degrades the RNA of RNA-DNA hybrids. The sequence is that of Ribonuclease HII from Flavobacterium psychrophilum (strain ATCC 49511 / DSM 21280 / CIP 103535 / JIP02/86).